A 311-amino-acid chain; its full sequence is Haloalkane dehalogenase (311 aa).

Residues 30 to 148 (AIVFQHGNPS…WDDFPDEVAQ (119 aa)) form the AB hydrolase-1 domain. Aspartate 107 acts as the Nucleophile in catalysis. Glutamate 131 acts as the Proton donor in catalysis. Catalysis depends on histidine 272, which acts as the Proton acceptor.

Belongs to the haloalkane dehalogenase family. Type 2 subfamily. Monomer.

The enzyme catalyses 1-haloalkane + H2O = a halide anion + a primary alcohol + H(+). Its function is as follows. Catalyzes hydrolytic cleavage of carbon-halogen bonds in halogenated aliphatic compounds, leading to the formation of the corresponding primary alcohols, halide ions and protons. This is Haloalkane dehalogenase from Mycolicibacterium smegmatis (strain ATCC 700084 / mc(2)155) (Mycobacterium smegmatis).